Reading from the N-terminus, the 256-residue chain is CCAAT/enhancer-binding protein delta (256 aa).

Ser-2 is modified (N-acetylserine). Disordered regions lie at residues 18 to 40, 92 to 121, and 139 to 206; these read TAEPAAFYEPGRAGKPGRGAEPA, GGPARLGGPGPAPRPLKREPDWGDGDAPGS, and AAAQ…NQEM. A Glycyl lysine isopeptide (Lys-Gly) (interchain with G-Cter in SUMO) cross-link involves residue Lys-108. The span at 143–162 shows a compositional bias: pro residues; the sequence is PTPPASPEPPRRSPAPPAPG. Residues 164–188 show a composition bias toward basic and acidic residues; the sequence is ARDKAAGKRGPDRGSPEYRQRRERN. One can recognise a bZIP domain in the interval 178–241; it reads SPEYRQRRER…AGLRRFFKQL (64 aa). Positions 182–209 are basic motif; sequence RQRRERNNIAVRKSRDKAKRRNQEMQQK. Residues 213–241 form a leucine-zipper region; sequence LSAENEKLQQRVEQLTRDLAGLRRFFKQL.

It belongs to the bZIP family. C/EBP subfamily. As to quaternary structure, binds DNA as a homodimer and as a heterodimer. Can form stable heterodimers with CEBPB. Can form stable heterodimers with CEBPA and CEBPE. Directly interacts with SPI1/PU.1; this interaction does not affect DNA-binding properties of each partner. Interacts with PRDM16.

The protein localises to the nucleus. Functionally, transcription activator that recognizes two different DNA motifs: the CCAAT homology common to many promoters and the enhanced core homology common to many enhancers. Important transcription factor regulating the expression of genes involved in immune and inflammatory responses. Transcriptional activator that enhances IL6 transcription alone and as heterodimer with CEBPB. The chain is CCAAT/enhancer-binding protein delta (CEBPD) from Bos taurus (Bovine).